The sequence spans 367 residues: MNTTANPSNIIVGLSGGVDSSVTAALLKQQGYQVRGVFMQNWEDDDNDEYCSIKQDSFDAIAVADIIGIDIDIVNFAAQYKDKVFAYFLQEYSAGRTPNPDVLCNAEIKFKCFLDYAVGQGADTIATGHYARKEVRNGVHYLLKGLDRNKDQSYFLYRLKPFQLERAIFPLGGLEKPEVRRLAAEFNLPTAAKKDSTGICFIGERPFREFLQKYLPTDNGKMVTPEGKTVGEHVGLMFYTLGQRKGLGIGGAGEPWFVAAKDLTKNELIVVQGHDHPLLYTRSLVMNDLSFTLPERPKAGRYTCKTRYRMADAPCELRYLDEETAELVFDEPQWAVTPGQSAVLYDGDICLGGGIIQTTDKPVIITR.

ATP-binding positions include 13 to 20 (GLSGGVDS) and methionine 39. The interaction with target base in tRNA stretch occupies residues 99–101 (NPD). The active-site Nucleophile is the cysteine 104. An intrachain disulfide couples cysteine 104 to cysteine 200. Glycine 128 contributes to the ATP binding site. The segment at 150 to 152 (KDQ) is interaction with tRNA. Cysteine 200 serves as the catalytic Cysteine persulfide intermediate. The segment at 307-308 (RY) is interaction with tRNA.

The protein belongs to the MnmA/TRMU family.

It is found in the cytoplasm. The enzyme catalyses S-sulfanyl-L-cysteinyl-[protein] + uridine(34) in tRNA + AH2 + ATP = 2-thiouridine(34) in tRNA + L-cysteinyl-[protein] + A + AMP + diphosphate + H(+). Functionally, catalyzes the 2-thiolation of uridine at the wobble position (U34) of tRNA, leading to the formation of s(2)U34. This Neisseria meningitidis serogroup C / serotype 2a (strain ATCC 700532 / DSM 15464 / FAM18) protein is tRNA-specific 2-thiouridylase MnmA.